We begin with the raw amino-acid sequence, 336 residues long: Dihydroorotate dehydrogenase (quinone) (336 aa).

FMN is bound by residues 62-66 and Thr86; that span reads AGLDK. Residue Lys66 coordinates substrate. A substrate-binding site is contributed by 111–115; that stretch reads NRMGF. Residues Asn139 and Asn172 each coordinate FMN. Asn172 is a substrate binding site. Ser175 acts as the Nucleophile in catalysis. Residue Asn177 participates in substrate binding. Positions 217 and 245 each coordinate FMN. 246–247 serves as a coordination point for substrate; the sequence is NT. FMN-binding positions include Gly268, Gly297, and 318–319; that span reads YS.

The protein belongs to the dihydroorotate dehydrogenase family. Type 2 subfamily. Monomer. FMN serves as cofactor.

Its subcellular location is the cell membrane. The catalysed reaction is (S)-dihydroorotate + a quinone = orotate + a quinol. Its pathway is pyrimidine metabolism; UMP biosynthesis via de novo pathway; orotate from (S)-dihydroorotate (quinone route): step 1/1. In terms of biological role, catalyzes the conversion of dihydroorotate to orotate with quinone as electron acceptor. The chain is Dihydroorotate dehydrogenase (quinone) from Pectobacterium carotovorum subsp. carotovorum (strain PC1).